The following is a 609-amino-acid chain: Dynamin-like protein 2 (609 aa).

The interval 1-16 (MQINLLNDFIKAYENT) is inserts into assembly domain of DLP1, required for tetramerization. The interval 17–25 (YSVSFDDSF) is linker. The region spanning 63 to 310 (NIAIIGQFSS…FVGIFDRLLN (248 aa)) is the Dynamin-type G domain. The tract at residues 68 to 75 (GQFSSGKS) is G1 motif. Residue 72-76 (SGKSS) participates in GDP binding. The interval 93–95 (PVT) is G2 motif. The interval 158–161 (DTPG) is G3 motif. The tract at residues 216 to 219 (NQKD) is G4 motif.

Belongs to the TRAFAC class dynamin-like GTPase superfamily. Dynamin/Fzo/YdjA family. Forms a 2:2 heterotetramer with DLP1. DLP2 forms a central back-to-back dimer flanked on each side by a DLP1 subunit. In the crystal structures the 2 DLP1 subunits are in very different conformations.

It is found in the cytoplasm. Its subcellular location is the cytosol. It catalyses the reaction GTP + H2O = GDP + phosphate + H(+). The heterotetrameric DLP1(2)-DLP2(2) complex tethers liposomes and may mediate their fusion. Initial binding is probably mediated by DLP1, while DLP2 couples DLP1 subunits and increases the effective reach of the complex up to 45 nm. The role of the nucleotide is unknown. This subunit alone very weakly binds to liposomes; GTP, GDP, GMPPCP and GMPPNP do not change heterotetramer binding. Tetramerization is required for GTPase activity, suggesting the GTPase domains (dynamin-type G) from DLP1 and DLP2 must dimerize to reconstitute the GTPase active site. The protein is Dynamin-like protein 2 of Campylobacter jejuni subsp. jejuni serotype O:23/36 (strain 81-176).